Consider the following 185-residue polypeptide: Elongation factor P (185 aa).

Belongs to the elongation factor P family.

The protein resides in the cytoplasm. It functions in the pathway protein biosynthesis; polypeptide chain elongation. Its function is as follows. Involved in peptide bond synthesis. Stimulates efficient translation and peptide-bond synthesis on native or reconstituted 70S ribosomes in vitro. Probably functions indirectly by altering the affinity of the ribosome for aminoacyl-tRNA, thus increasing their reactivity as acceptors for peptidyl transferase. The sequence is that of Elongation factor P from Desulforudis audaxviator (strain MP104C).